We begin with the raw amino-acid sequence, 129 residues long: MTDLAGPTITPNLQLVYVSNVERSTDFYRFIFKKEPVFVTPRYVAFPSSGDALFAIWSGGEEPVAEIPRFSEIGIMLPTGEDVDKLFNEWTKQKSHQIIVIKEPYTDVFGRTFLISDPDGHIIRVCPLD.

The VOC domain maps to 10 to 128 (TPNLQLVYVS…DGHIIRVCPL (119 aa)). Residues 42-43 (RY) and tryptophan 57 each bind D-alanylgriseoluteate.

As to quaternary structure, homodimer.

In terms of biological role, required for resistance to the phenazine antibiotic D-alanylgriseoluteic acid (AGA), an antibiotic produced by E.agglomerans itself, and thus protects the bacterium against phenazine toxicity. Probably binds AGA and acts as a chaperone that works in tandem with a membrane transporter for subsequent antibiotic secretion. This is Phenazine antibiotic resistance protein EhpR from Enterobacter agglomerans (Erwinia herbicola).